The following is an 834-amino-acid chain: Striatin-interacting protein 2 (834 aa).

The tract at residues 1-48 (MEDPAAPGTGGPPANGNGNGGGKGKQAAPKGREAFRSQRRESEGSVDC) is disordered. Residues 8–24 (GTGGPPANGNGNGGGKG) show a composition bias toward gly residues. Positions 30-43 (KGREAFRSQRRESE) are enriched in basic and acidic residues. Phosphoserine occurs at positions 318, 329, and 354. The interval 321–345 (SYTLDLGESQLAPPPSKLRGRRGSR) is disordered. A disordered region spans residues 360–382 (ERDLFKTEEPATEEEEESAGDGE). Residues 369-379 (PATEEEEESAG) show a composition bias toward acidic residues.

The protein belongs to the STRIP family. Part of the core of STRIPAK complexes composed of PP2A catalytic and scaffolding subunits, the striatins (PP2A regulatory subunits), the striatin-associated proteins MOB4, STRIP1 and STRIP2, PDCD10 and members of the STE20 kinases, such as STK24 and STK26. Interacts with CTTNBP2NL.

The protein localises to the cytoplasm. In terms of biological role, plays a role in the regulation of cell morphology and cytoskeletal organization. Required in the control of cell shape. Calmodulin-binding scaffolding protein which is the center of the striatin-interacting phosphatase and kinase (STRIPAK) complexes. STRIPAK complexes have critical roles in protein (de)phosphorylation and are regulators of multiple signaling pathways including Hippo, MAPK, nuclear receptor and cytoskeleton remodeling. Different types of STRIPAK complexes are involved in a variety of biological processes such as cell growth, differentiation, apoptosis, metabolism and immune regulation. The chain is Striatin-interacting protein 2 from Homo sapiens (Human).